A 406-amino-acid polypeptide reads, in one-letter code: Tyrosine--tRNA ligase (406 aa).

Tyr-35 contributes to the L-tyrosine binding site. Residues 40–49 (PTGPSLHIGH) carry the 'HIGH' region motif. L-tyrosine is bound by residues Tyr-168 and Gln-172. The short motif at 228–232 (KMGKS) is the 'KMSKS' region element. Lys-231 serves as a coordination point for ATP. The S4 RNA-binding domain maps to 339 to 405 (IGIIDLFAEA…GKKRFMRIIF (67 aa)).

It belongs to the class-I aminoacyl-tRNA synthetase family. TyrS type 1 subfamily. Homodimer.

It localises to the cytoplasm. The catalysed reaction is tRNA(Tyr) + L-tyrosine + ATP = L-tyrosyl-tRNA(Tyr) + AMP + diphosphate + H(+). In terms of biological role, catalyzes the attachment of tyrosine to tRNA(Tyr) in a two-step reaction: tyrosine is first activated by ATP to form Tyr-AMP and then transferred to the acceptor end of tRNA(Tyr). In Treponema denticola (strain ATCC 35405 / DSM 14222 / CIP 103919 / JCM 8153 / KCTC 15104), this protein is Tyrosine--tRNA ligase.